Here is a 238-residue protein sequence, read N- to C-terminus: Ribonuclease PH (238 aa).

Phosphate-binding positions include Arg86 and 124-126 (GTR).

This sequence belongs to the RNase PH family. In terms of assembly, homohexameric ring arranged as a trimer of dimers.

The enzyme catalyses tRNA(n+1) + phosphate = tRNA(n) + a ribonucleoside 5'-diphosphate. Phosphorolytic 3'-5' exoribonuclease that plays an important role in tRNA 3'-end maturation. Removes nucleotide residues following the 3'-CCA terminus of tRNAs; can also add nucleotides to the ends of RNA molecules by using nucleoside diphosphates as substrates, but this may not be physiologically important. Probably plays a role in initiation of 16S rRNA degradation (leading to ribosome degradation) during starvation. This is Ribonuclease PH from Geotalea uraniireducens (strain Rf4) (Geobacter uraniireducens).